The following is a 202-amino-acid chain: Endoribonuclease YbeY (202 aa).

Zn(2+)-binding residues include histidine 120, histidine 124, and histidine 130.

This sequence belongs to the endoribonuclease YbeY family. Zn(2+) is required as a cofactor.

Its subcellular location is the cytoplasm. Its function is as follows. Single strand-specific metallo-endoribonuclease involved in late-stage 70S ribosome quality control and in maturation of the 3' terminus of the 16S rRNA. This is Endoribonuclease YbeY from Corynebacterium kroppenstedtii (strain DSM 44385 / JCM 11950 / CIP 105744 / CCUG 35717).